A 248-amino-acid polypeptide reads, in one-letter code: Probable transcriptional regulatory protein PSPPH_3775 (248 aa).

It belongs to the TACO1 family.

Its subcellular location is the cytoplasm. The sequence is that of Probable transcriptional regulatory protein PSPPH_3775 from Pseudomonas savastanoi pv. phaseolicola (strain 1448A / Race 6) (Pseudomonas syringae pv. phaseolicola (strain 1448A / Race 6)).